The chain runs to 158 residues: Phosphopantetheine adenylyltransferase (158 aa).

Threonine 10 is a binding site for substrate. ATP contacts are provided by residues 10–11 (TF) and histidine 18. Residues lysine 42, leucine 74, and arginine 88 each contribute to the substrate site. ATP is bound by residues 89-91 (GIR), glutamate 99, and 124-130 (WRYLSST).

It belongs to the bacterial CoaD family. As to quaternary structure, homohexamer. Mg(2+) is required as a cofactor.

Its subcellular location is the cytoplasm. It carries out the reaction (R)-4'-phosphopantetheine + ATP + H(+) = 3'-dephospho-CoA + diphosphate. Its pathway is cofactor biosynthesis; coenzyme A biosynthesis; CoA from (R)-pantothenate: step 4/5. Functionally, reversibly transfers an adenylyl group from ATP to 4'-phosphopantetheine, yielding dephospho-CoA (dPCoA) and pyrophosphate. The chain is Phosphopantetheine adenylyltransferase from Actinobacillus pleuropneumoniae serotype 5b (strain L20).